A 288-amino-acid polypeptide reads, in one-letter code: MAEKKQWHETLHDQFGQYFAVDNVLYHEKTDHQDLIIFENAAFGRVMALDGVVQTTERDEFIYHEMMTHVPLLAHGHAKDVLIIGGGDGAMLREVTRHKNVESITMVEIDAGVVSFCRQYLPNHNAGSYDDPRFKLVIDDGVNFVNQTSQTFDVIISDCTDPIGPGESLFTSAFYEGCKRCLNPGGIFVAQNGVCFLQQEEAIDSHRKLSNYFSDVGFYQAAIPTYYGGIMTFAWATDNDALRHLSSEIIQARFLASGLKCRYYNPAVHTAAFALPQYLQDALASQPS.

Residues 9-238 enclose the PABS domain; the sequence is ETLHDQFGQY…GIMTFAWATD (230 aa). Position 33 (Gln-33) interacts with S-methyl-5'-thioadenosine. Spermidine-binding residues include His-64 and Asp-88. S-methyl-5'-thioadenosine contacts are provided by residues Glu-108 and 140–141; that span reads DG. The active-site Proton acceptor is Asp-158. 158 to 161 provides a ligand contact to spermidine; the sequence is DCTD. Pro-165 is an S-methyl-5'-thioadenosine binding site.

Belongs to the spermidine/spermine synthase family. In terms of assembly, homodimer or homotetramer.

It localises to the cytoplasm. It carries out the reaction S-adenosyl 3-(methylsulfanyl)propylamine + putrescine = S-methyl-5'-thioadenosine + spermidine + H(+). Its pathway is amine and polyamine biosynthesis; spermidine biosynthesis; spermidine from putrescine: step 1/1. Its function is as follows. Catalyzes the irreversible transfer of a propylamine group from the amino donor S-adenosylmethioninamine (decarboxy-AdoMet) to putrescine (1,4-diaminobutane) to yield spermidine. The chain is Polyamine aminopropyltransferase from Escherichia fergusonii (strain ATCC 35469 / DSM 13698 / CCUG 18766 / IAM 14443 / JCM 21226 / LMG 7866 / NBRC 102419 / NCTC 12128 / CDC 0568-73).